A 66-amino-acid polypeptide reads, in one-letter code: Beta-mammal toxin Cv3 (66 aa).

The LCN-type CS-alpha/beta domain maps to 1 to 66 (KEGYIVNYYD…VWPLPNKTCN (66 aa)). 4 disulfide bridges follow: C12/C65, C16/C41, C25/C46, and C29/C48.

In terms of tissue distribution, expressed by the venom gland.

Its subcellular location is the secreted. Beta toxins bind voltage-independently at site-4 of sodium channels (Nav) and reduces peak current and shifts the voltage of activation toward more negative potentials thereby affecting sodium channel activation and promoting spontaneous and repetitive firing. This toxin is strongly toxic to mice. In Centruroides villegasi (Scorpion), this protein is Beta-mammal toxin Cv3.